An 849-amino-acid chain; its full sequence is Protein lap1 (849 aa).

17 LRR repeats span residues 18-39 (VIDK…WQHE), 41-62 (TLEE…LFYC), 64-85 (GLRV…IGSL), 87-108 (QLQH…IKSC), 110-131 (HLTH…ITSL), 133-155 (SLQE…GRLV), 156-177 (NLRI…MVRL), 179-200 (NLQR…VGEL), 202-224 (SLRE…GKLR), 225-246 (DLQH…LSNW), 248-269 (NVEV…VGML), 271-292 (SLVT…ISYL), 294-315 (QLEE…IGML), 317-338 (SLRF…LCSC), 340-362 (QLSV…GNLS), 363-384 (KMKV…MLNL), and 386-407 (NLTS…QYLD). Residues 716–752 (NNISNNLEPNPEEEDQELDDTMSQHSLNSTATNNTSK) are disordered. Positions 725-735 (NPEEEDQELDD) are enriched in acidic residues. The span at 736 to 752 (TMSQHSLNSTATNNTSK) shows a compositional bias: polar residues. Positions 770–849 (VKQVTLKWEN…TVMNIMLSRK (80 aa)) constitute a PDZ domain.

Belongs to the LAP (LRR and PDZ) protein family.

Functionally, may have a role in assembling adherens junctions. The protein is Protein lap1 of Drosophila melanogaster (Fruit fly).